Here is a 185-residue protein sequence, read N- to C-terminus: NADH-dependent FMN reductase AsuE2 (185 aa).

Over residues 1–13 the composition is skewed to low complexity; the sequence is MSTHTARRAGATA. The interval 1–24 is disordered; that stretch reads MSTHTARRAGATAGHDRDRGTEPG. A compositionally biased stretch (basic and acidic residues) spans 14-24; sequence GHDRDRGTEPG.

It belongs to the non-flavoprotein flavin reductase family. In terms of assembly, does not interact with AsuE1, suggesting a possible transient interaction between the two enzymes instead of formation of a stable complex.

It carries out the reaction FMNH2 + NAD(+) = FMN + NADH + 2 H(+). It participates in antibiotic biosynthesis. Functionally, involved in the biosynthesis of the antibiotic asukamycin. When flavin concentration is low, AsuE2 assists the protoasukamycin 4-monooxygenase AsuE1 by providing a reduced form of flavin, enhancing AsuE1 activity. The chain is NADH-dependent FMN reductase AsuE2 from Streptomyces nodosus subsp. asukaensis.